The primary structure comprises 303 residues: uncharacterized protein (303 aa).

Residues 7–12 (GAGGVG) and asparagine 101 contribute to the NADP(+) site. The Proton donor role is filled by lysine 184. Residue glutamate 267 coordinates NADP(+).

Belongs to the ketopantoate reductase family.

This is an uncharacterized protein from Bacillus subtilis (strain 168).